Reading from the N-terminus, the 221-residue chain is PKHD-type hydroxylase PMN2A_0775 (221 aa).

One can recognise a Fe2OG dioxygenase domain in the interval 80-174; that stretch reads LIHGVMFTQS…RHVCVGWIQS (95 aa). Fe cation-binding residues include His98, Asp100, and His155. Arg165 contributes to the 2-oxoglutarate binding site.

Requires Fe(2+) as cofactor. It depends on L-ascorbate as a cofactor.

The chain is PKHD-type hydroxylase PMN2A_0775 from Prochlorococcus marinus (strain NATL2A).